The sequence spans 498 residues: MAAAAVAADQKVVTMTSLREGCACAAPPAAAAPPMPKMAAAQRVVAELREACATPAARLAEVAAAMAGEMEAGLAVEGGSSEMKMIVSYVDSLPTGGEEGSYYALDLGGTNFRVLRVRLAGGGVAERVAREVPIPPGLMSGGGATSECLFGFIASALAEFVGEEEEEGGLDGGERELGFTFSFPVHQTSIASGTLIRWTKAFAVDDAIGEDVVAALQAAMSERGLDMRVSALINDTVGTLAAGSYYDEDVVAAVILGTGTNAAYVEDATAIAKLHPSQLPASNTMVINTEWGSFASPCLPLTEFDEALDQESLNPGEQTYEKLISGMYLGEIVRRVLLKISSRCPSLLGGAGELATPFVLRTPDVSAMHHDETPDLSIVGEKLERTLGIRGTSPEARRMVVEVCDIVATRAARLAAAGIVGILKKIGRVDGGEGRRRRSVVAVDGGLFEHYGKFRRCMESAVRELLGEAAAERVVVKLASDGSGLGAALVAAAHSQRA.

The Hexokinase domain maps to 39 to 492 (AAAQRVVAEL…SGLGAALVAA (454 aa)). The interval 95-233 (TGGEEGSYYA…GLDMRVSALI (139 aa)) is hexokinase small subdomain. ADP contacts are provided by glycine 109, threonine 110, and asparagine 111. Residues threonine 199, lysine 200, asparagine 234, and aspartate 235 each coordinate D-glucose. Positions 234-481 (NDTVGTLAAG…ERVVVKLASD (248 aa)) are hexokinase large subdomain. ADP is bound at residue threonine 258. The D-glucose site is built by asparagine 261, glutamate 290, and glutamate 321. An ADP-binding site is contributed by glycine 446.

The protein belongs to the hexokinase family. In terms of tissue distribution, highly expressed in senescent leaves.

The enzyme catalyses a D-hexose + ATP = a D-hexose 6-phosphate + ADP + H(+). The catalysed reaction is D-fructose + ATP = D-fructose 6-phosphate + ADP + H(+). It catalyses the reaction D-glucose + ATP = D-glucose 6-phosphate + ADP + H(+). It functions in the pathway carbohydrate metabolism; hexose metabolism. The protein operates within carbohydrate degradation; glycolysis; D-glyceraldehyde 3-phosphate and glycerone phosphate from D-glucose: step 1/4. Its function is as follows. Fructose and glucose phosphorylating enzyme. Acts as a positive regulator of leaf senescence by mediating glucose accumulation and inducing an increase in reactive oxygen species (ROS). The chain is Hexokinase-1 (HXK1) from Oryza sativa subsp. japonica (Rice).